The sequence spans 256 residues: Small ribosomal subunit protein eS1 (256 aa).

N-acetylalanine; partial is present on Ala2.

The protein belongs to the eukaryotic ribosomal protein eS1 family. Component of the small ribosomal subunit. Mature ribosomes consist of a small (40S) and a large (60S) subunit. The 40S subunit contains about 33 different proteins and 1 molecule of RNA (18S). The 60S subunit contains about 49 different proteins and 3 molecules of RNA (25S, 5.8S and 5S).

The protein resides in the cytoplasm. The sequence is that of Small ribosomal subunit protein eS1 from Lachancea thermotolerans (strain ATCC 56472 / CBS 6340 / NRRL Y-8284) (Yeast).